The primary structure comprises 244 residues: Ribonuclease 3 (244 aa).

The RNase III domain occupies 5–136; the sequence is LAELERAIGI…LVGAIYLDQG (132 aa). Position 49 (E49) interacts with Mg(2+). D53 is an active-site residue. Positions 122 and 125 each coordinate Mg(2+). E125 is an active-site residue. The region spanning 161 to 229 is the DRBM domain; that stretch reads DPTTRLQELM…ARKALAAWDK (69 aa).

This sequence belongs to the ribonuclease III family. Homodimer. Requires Mg(2+) as cofactor.

The protein localises to the cytoplasm. The catalysed reaction is Endonucleolytic cleavage to 5'-phosphomonoester.. Functionally, digests double-stranded RNA. Involved in the processing of primary rRNA transcript to yield the immediate precursors to the large and small rRNAs (23S and 16S). Processes some mRNAs, and tRNAs when they are encoded in the rRNA operon. Processes pre-crRNA and tracrRNA of type II CRISPR loci if present in the organism. This chain is Ribonuclease 3, found in Chloroflexus aurantiacus (strain ATCC 29364 / DSM 637 / Y-400-fl).